The primary structure comprises 999 residues: Disks large-associated protein 1 (999 aa).

Disordered regions lie at residues 155-213 (HSLE…GYWS), 395-418 (MAEDDSGDSDGSPKPSPKMQARRA), and 918-989 (NWRP…DSIE). Positions 194–204 (RERCKSAEPKN) are enriched in basic and acidic residues. Basic and acidic residues-rich tracts occupy residues 923–932 (DPPERKERRL) and 947–965 (LARDRSLESTEKQRQEARK). The span at 976–985 (VRQNSATESA) shows a compositional bias: polar residues. Positions 997 to 999 (TRL) match the PDZ-binding motif.

The protein belongs to the SAPAP family.

It localises to the cell membrane. The protein resides in the postsynaptic density. The protein localises to the synapse. Part of the postsynaptic scaffold in neuronal cells. The sequence is that of Disks large-associated protein 1 from Danio rerio (Zebrafish).